The primary structure comprises 234 residues: Glucosamine-6-phosphate deaminase (234 aa).

The active-site Proton acceptor; for enolization step is Asp62. Catalysis depends on Asn128, which acts as the For ring-opening step. Catalysis depends on His130, which acts as the Proton acceptor; for ring-opening step. The active-site For ring-opening step is the Glu135.

This sequence belongs to the glucosamine/galactosamine-6-phosphate isomerase family. NagB subfamily.

The enzyme catalyses alpha-D-glucosamine 6-phosphate + H2O = beta-D-fructose 6-phosphate + NH4(+). The protein operates within amino-sugar metabolism; N-acetylneuraminate degradation; D-fructose 6-phosphate from N-acetylneuraminate: step 5/5. Functionally, catalyzes the reversible isomerization-deamination of glucosamine 6-phosphate (GlcN6P) to form fructose 6-phosphate (Fru6P) and ammonium ion. The polypeptide is Glucosamine-6-phosphate deaminase (Streptococcus equi subsp. equi (strain 4047)).